The sequence spans 174 residues: Peptide deformylase (174 aa).

The Fe cation site is built by Cys-91 and His-133. Residue Glu-134 is part of the active site. His-137 is a binding site for Fe cation.

It belongs to the polypeptide deformylase family. It depends on Fe(2+) as a cofactor.

It carries out the reaction N-terminal N-formyl-L-methionyl-[peptide] + H2O = N-terminal L-methionyl-[peptide] + formate. Its function is as follows. Removes the formyl group from the N-terminal Met of newly synthesized proteins. Requires at least a dipeptide for an efficient rate of reaction. N-terminal L-methionine is a prerequisite for activity but the enzyme has broad specificity at other positions. The chain is Peptide deformylase from Fusobacterium nucleatum subsp. nucleatum (strain ATCC 25586 / DSM 15643 / BCRC 10681 / CIP 101130 / JCM 8532 / KCTC 2640 / LMG 13131 / VPI 4355).